Here is a 542-residue protein sequence, read N- to C-terminus: LysM domain-containing protein ARB_00327 (542 aa).

The N-terminal stretch at 1–35 (MLSSVLFPAMRTLLLLKYVFSLISLSAICCQTVSA) is a signal peptide. N-linked (GlcNAc...) asparagine glycans are attached at residues N218, N298, N381, and N415. The region spanning 264-310 (RWYGVKKGDYCNLIVLKFGITMDNFIFLNPALNSNCTNLYAEESYCV) is the LysM 1 domain. A disordered region spans residues 439–484 (DSDEPTPTTPITTSDDPTSTSATPTTPTTSSKPSPGAPTMTGQPSA). A compositionally biased stretch (low complexity) spans 443–472 (PTPTTPITTSDDPTSTSATPTTPTTSSKPS). A LysM 2 domain is found at 487–534 (KWHTVTNGESCTVIPKTFGITLEQFLAWNPTVKSDCTENFWAGYAYCV).

The protein resides in the secreted. In terms of biological role, might have a role in sequestration of chitin oligosaccharides (breakdown products of fungal cell walls that are released during invasion and act as triggers of host immunity) to dampen host defense. This chain is LysM domain-containing protein ARB_00327, found in Arthroderma benhamiae (strain ATCC MYA-4681 / CBS 112371) (Trichophyton mentagrophytes).